Here is a 266-residue protein sequence, read N- to C-terminus: Anamorsin homolog (266 aa).

The segment at 1–164 (MIINFVGNTL…NITAENPDFL (164 aa)) is N-terminal SAM-like domain. A linker region spans residues 165–185 (SNEDNDVSSDDEDLYNNEDDK). [4Fe-4S] cluster contacts are provided by C229, C232, C240, and C243. 2 consecutive short sequence motifs (cx2C motif) follow at residues 229 to 232 (CGNC) and 240 to 243 (CASC). Residues 229–243 (CGNCYLGDAFRCASC) form a fe-S binding site B region.

This sequence belongs to the anamorsin family. As to quaternary structure, monomer. The cofactor is [4Fe-4S] cluster.

It localises to the cytoplasm. It is found in the mitochondrion intermembrane space. Its function is as follows. Component of the cytosolic iron-sulfur (Fe-S) protein assembly (CIA) machinery. Required for the maturation of extramitochondrial Fe-S proteins. Part of an electron transfer chain functioning in an early step of cytosolic Fe-S biogenesis, facilitating the de novo assembly of a [4Fe-4S] cluster on the cytosolic Fe-S scaffold complex. Electrons are transferred from NADPH via a FAD- and FMN-containing diflavin oxidoreductase. Together with the diflavin oxidoreductase, also required for the assembly of the diferric tyrosyl radical cofactor of ribonucleotide reductase (RNR), probably by providing electrons for reduction during radical cofactor maturation in the catalytic small subunit. This chain is Anamorsin homolog, found in Plasmodium falciparum (isolate 3D7).